The primary structure comprises 103 residues: 4-amino-4-deoxychorismate mutase (103 aa).

The Chorismate mutase domain occupies 1–92 (MTEQNELQRL…EMCRVEDLVM (92 aa)).

The catalysed reaction is 4-amino-4-deoxychorismate = 4-amino-4-deoxyprephenate. It participates in antibiotic biosynthesis. Functionally, involved in chloramphenicol biosynthesis. Probably catalyzes the conversion of 4-amino-4-deoxychorismate to 4-amino-4-deoxyprephenate. This Streptomyces venezuelae (strain ATCC 10712 / CBS 650.69 / DSM 40230 / JCM 4526 / NBRC 13096 / PD 04745) protein is 4-amino-4-deoxychorismate mutase.